The primary structure comprises 59 residues: Single-pass membrane and coiled-coil domain-containing protein 4 (59 aa).

The segment at 1 to 23 (MRQLKGKPKKETSKDKKERKQAM) is disordered. Basic and acidic residues predominate over residues 9 to 22 (KKETSKDKKERKQA). Positions 9 to 31 (KKETSKDKKERKQAMQEARQQIT) form a coiled coil. Residues 32–52 (TVVLPTLAVVVLLIVVFVYVA) form a helical membrane-spanning segment.

The protein belongs to the SMCO4 family.

Its subcellular location is the membrane. In Homo sapiens (Human), this protein is Single-pass membrane and coiled-coil domain-containing protein 4 (SMCO4).